The sequence spans 466 residues: MATEGDKLLGGRFVGSTDPIMEILSSSISTEQRLTEVDIQASMAYAKALEKASILTKTELEKILSGLEKISEESSKGVLVMTQSDEDIQTAIERRLKELIGDIAGKLQTGRSRNEQVVTDLKLLLKSSISVISTHLLQLIKTLVERAAIEIDIIMPGYTHLQKALPIRWSQFLLSHAVALTRDSERLGEVKKRITVLPLGSGALAGNPLEIDRELLRSELDMTSITLNSIDAISERDFVVELISVATLLMIHLSKLAEDLIIFSTTEFGFVTLSDAYSTGSSLLPQKKNPDSLELIRSKAGRVFGRLAAILMVLKGIPSTFSKDLQEDKEAVLDVVDTLTAVLQVATGVISTLQVNKENMEKALTPELLSTDLALYLVRKGMPIRQAQTASGKAVHLAETKGITINNLTLEDLKSISPLFASDVSQVFSVVNSVEQYTAVGGTAKSSVTAQIEQLRELLKKQKEQA.

Ala-2 carries the post-translational modification Blocked amino end (Ala).

It belongs to the lyase 1 family. Argininosuccinate lyase subfamily. Homotetramer. The N-terminus is blocked. In terms of tissue distribution, eye lens.

Delta crystallin, the principal crystallin in embryonic lens, is found only in birds and reptiles. This Gallus gallus (Chicken) protein is Delta-1 crystallin (ASL1).